The following is a 67-amino-acid chain: Large ribosomal subunit protein uL29 (67 aa).

It belongs to the universal ribosomal protein uL29 family.

The sequence is that of Large ribosomal subunit protein uL29 from Methanothrix thermoacetophila (strain DSM 6194 / JCM 14653 / NBRC 101360 / PT) (Methanosaeta thermophila).